The following is a 431-amino-acid chain: Adenylosuccinate synthetase (431 aa).

Residues 13 to 19 (GDEGKGK) and 41 to 43 (GHT) contribute to the GTP site. The active-site Proton acceptor is the Asp-14. Residues Asp-14 and Gly-41 each contribute to the Mg(2+) site. Residues 14–17 (DEGK), 39–42 (NAGH), Thr-130, Arg-144, Gln-225, Thr-240, and Arg-304 each bind IMP. His-42 (proton donor) is an active-site residue. A substrate-binding site is contributed by 300–306 (AVTGRPR). GTP-binding positions include Arg-306, 332–334 (KLD), and 415–417 (STG).

It belongs to the adenylosuccinate synthetase family. In terms of assembly, homodimer. Mg(2+) serves as cofactor.

It localises to the cytoplasm. The enzyme catalyses IMP + L-aspartate + GTP = N(6)-(1,2-dicarboxyethyl)-AMP + GDP + phosphate + 2 H(+). It participates in purine metabolism; AMP biosynthesis via de novo pathway; AMP from IMP: step 1/2. Its function is as follows. Plays an important role in the de novo pathway of purine nucleotide biosynthesis. Catalyzes the first committed step in the biosynthesis of AMP from IMP. The sequence is that of Adenylosuccinate synthetase from Legionella pneumophila subsp. pneumophila (strain Philadelphia 1 / ATCC 33152 / DSM 7513).